We begin with the raw amino-acid sequence, 91 residues long: Bombyxin B-1 homolog (91 aa).

A signal peptide spans 1-19; that stretch reads MKVSMFVVIVLCMVAASSA. Cystine bridges form between Cys-27/Cys-78, Cys-39/Cys-91, and Cys-77/Cys-82. Positions 49 to 69 are cleaved as a propeptide — c peptide like; it reads SGAQYARYGWQSPESREGARG.

This sequence belongs to the insulin family. Heterodimer of a B chain and an A chain linked by two disulfide bonds.

It is found in the secreted. In terms of biological role, brain peptide responsible for activation of prothoracic glands to produce ecdysone in insects. In Samia cynthia (Ailanthus silkmoth), this protein is Bombyxin B-1 homolog (SBXB1).